The following is a 252-amino-acid chain: HTH-type transcriptional regulator XynR (252 aa).

Residues 4-66 form the HTH iclR-type domain; that stretch reads IQSVERALQI…PENGKYRLGM (63 aa). A DNA-binding region (H-T-H motif) is located at residues 25-45; it reads KITDISKLMGLSKSTLHSLLK. The IclR-ED domain occupies 81–250; sequence IRQKAKGWLT…GLALSRALGY (170 aa).

With respect to regulation, activity may be controlled by xylonate. Functionally, involved in regulation of xylonate catabolism. Represses the expression of both yagA and yagEF operons. Binds mainly at a single site within the spacer of the bidirectional transcription units yagA and yagEF. The polypeptide is HTH-type transcriptional regulator XynR (Escherichia coli (strain K12)).